Consider the following 58-residue polypeptide: Photosystem II reaction center protein K (58 aa).

Residues 1 to 21 constitute a propeptide that is removed on maturation; that stretch reads MLVISNVYPSNLFTLINPFFA. A helical membrane pass occupies residues 29-49; the sequence is IFDPIVDVMPIIPVFFFLLAF.

The protein belongs to the PsbK family. In terms of assembly, PSII is composed of 1 copy each of membrane proteins PsbA, PsbB, PsbC, PsbD, PsbE, PsbF, PsbH, PsbI, PsbJ, PsbK, PsbL, PsbM, PsbT, PsbX, PsbY, PsbZ, Psb30/Ycf12, at least 3 peripheral proteins of the oxygen-evolving complex and a large number of cofactors. It forms dimeric complexes.

The protein localises to the plastid. It is found in the chloroplast thylakoid membrane. One of the components of the core complex of photosystem II (PSII). PSII is a light-driven water:plastoquinone oxidoreductase that uses light energy to abstract electrons from H(2)O, generating O(2) and a proton gradient subsequently used for ATP formation. It consists of a core antenna complex that captures photons, and an electron transfer chain that converts photonic excitation into a charge separation. The protein is Photosystem II reaction center protein K of Psilotum nudum (Whisk fern).